The primary structure comprises 659 residues: Interferon-induced GTP-binding protein Mx3 (659 aa).

One can recognise a Dynamin-type G domain in the interval 65 to 338 (DLALPAIAVI…LISHICKSLP (274 aa)). Positions 75-82 (GDQSSGKS) are G1 motif. 75-82 (GDQSSGKS) is a binding site for GTP. The segment at 100 to 102 (VTR) is G2 motif. The interval 176–179 (DLPG) is G3 motif. Residues 176–180 (DLPGI) and 245–248 (TKPD) each bind GTP. The tract at residues 245 to 248 (TKPD) is G4 motif. The tract at residues 277–280 (KCRG) is G5 motif. The segment at 547-568 (EAEEEERKHGKSRSAQSPNLQT) is disordered. The span at 559 to 568 (RSAQSPNLQT) shows a compositional bias: polar residues. Positions 571–659 (MDEIFQHLNA…AQRRLAKFPG (89 aa)) constitute a GED domain.

Belongs to the TRAFAC class dynamin-like GTPase superfamily. Dynamin/Fzo/YdjA family.

It is found in the cytoplasm. Does not show activity against influenza virus or VSV; although it only differs from Mx2 by 8 positions. In Rattus norvegicus (Rat), this protein is Interferon-induced GTP-binding protein Mx3 (Mx3).